The sequence spans 196 residues: Nodulation protein A (196 aa).

This sequence belongs to the NodA family.

It is found in the cytoplasm. Functionally, N-acyltransferase required for nodulation. Acts in the production of a small, heat-stable compound (Nod) that stimulates mitosis in various plant protoplasts. This is Nodulation protein A from Mesorhizobium sp. (strain 7653R).